We begin with the raw amino-acid sequence, 66 residues long: Phylloseptin-S4 (66 aa).

Positions 1–22 (MAFLKKSLFLVLFLGLVSLSIC) are cleaved as a signal peptide. A propeptide spanning residues 23–46 (EEEKRETEEEEHDQEEDDKSEEKR) is cleaved from the precursor. Residues 25–44 (EKRETEEEEHDQEEDDKSEE) form a disordered region. Acidic residues predominate over residues 30–41 (EEEEHDQEEDDK). Leu-65 carries the post-translational modification Leucine amide.

In terms of tissue distribution, expressed by the skin glands.

It is found in the secreted. The protein localises to the target cell membrane. Its function is as follows. Antimicrobial peptide with high activity against Gram-positive bacteria, moderate activity against Gram-negative bacteria, and moderate activity against fungi. Acts by causing bacterial membrane disruption inducing leakage of the intracellular content followed by cell death. It adopts an alpha-helical amphipathic structure in membrane environments. Also shows highly potent antiparasitic activity against Leishmania species. Shows moderate hemolytic activity on human erythrocytes (LC(50)=33 uM). Is also active on human monocytes (IC(50)=23 uM). The polypeptide is Phylloseptin-S4 (Phyllomedusa sauvagei (Sauvage's leaf frog)).